The primary structure comprises 215 residues: UPF0126 membrane protein DR_2368 (215 aa).

6 helical membrane passes run 15-35 (LHWL…LLGV), 39-59 (FDLF…GAIR), 75-95 (TYLW…ERLA), 101-121 (LSLF…LGAI), 123-143 (IGLG…GGGI), and 162-182 (LYAT…PHFT).

It belongs to the UPF0126 family.

The protein resides in the cell membrane. The chain is UPF0126 membrane protein DR_2368 from Deinococcus radiodurans (strain ATCC 13939 / DSM 20539 / JCM 16871 / CCUG 27074 / LMG 4051 / NBRC 15346 / NCIMB 9279 / VKM B-1422 / R1).